A 110-amino-acid chain; its full sequence is Hydrogenase maturation factor HypA (110 aa).

Residue H2 participates in Ni(2+) binding. Zn(2+) contacts are provided by C70, C73, C86, and C89.

This sequence belongs to the HypA/HybF family.

Involved in the maturation of [NiFe] hydrogenases. Required for nickel insertion into the metal center of the hydrogenase. In Geobacter metallireducens (strain ATCC 53774 / DSM 7210 / GS-15), this protein is Hydrogenase maturation factor HypA.